The chain runs to 292 residues: MSAGNGTPWDATWNITVQWLAVDIACRTLMFLKLMATYSAAFLPVVIGLDRQAAVLNPLGSRSGVRKLLGAAWGLSFLLAFPQLFLFHTVHCAGPVPFTQCVTKGSFKAQWQETTYNLFTFCCLFLLPLTAMAICYSRIVLSVSRPQTRKGSHAPAGEFALPRSFDNCPRVRLRALRLALLILLTFILCWTPYYLLGMWYWFSPTMLTEVPPSLSHILFLLGLLNAPLDPLLYGAFTLGCRRGHQELSIDSSKEGSGRMLQEEIHAFRQLEVQKTVTSRRAGETKGISITSI.

Topologically, residues 1 to 28 (MSAGNGTPWDATWNITVQWLAVDIACRT) are extracellular. A disulfide bond links Cys26 and Cys101. Residues 29–49 (LMFLKLMATYSAAFLPVVIGL) traverse the membrane as a helical segment. Residues 50–67 (DRQAAVLNPLGSRSGVRK) lie on the Cytoplasmic side of the membrane. A helical transmembrane segment spans residues 68-88 (LLGAAWGLSFLLAFPQLFLFH). Topologically, residues 89–115 (TVHCAGPVPFTQCVTKGSFKAQWQETT) are extracellular. Residues 116–136 (YNLFTFCCLFLLPLTAMAICY) traverse the membrane as a helical segment. Residues 137–177 (SRIVLSVSRPQTRKGSHAPAGEFALPRSFDNCPRVRLRALR) are Cytoplasmic-facing. A helical membrane pass occupies residues 178–198 (LALLILLTFILCWTPYYLLGM). Topologically, residues 199-216 (WYWFSPTMLTEVPPSLSH) are extracellular. The chain crosses the membrane as a helical span at residues 217-237 (ILFLLGLLNAPLDPLLYGAFT). Residues 238 to 292 (LGCRRGHQELSIDSSKEGSGRMLQEEIHAFRQLEVQKTVTSRRAGETKGISITSI) lie on the Cytoplasmic side of the membrane.

This sequence belongs to the G-protein coupled receptor 1 family. In terms of processing, phosphorylated on the C-terminal cytoplasmic tail. In terms of tissue distribution, expressed in many tissues.

It is found in the cell membrane. Functionally, putative receptor for gonadotropin releasing hormone II (GnRH II) which is most probably non-functional. In Homo sapiens (Human), this protein is Putative gonadotropin-releasing hormone II receptor (GNRHR2).